Here is a 101-residue protein sequence, read N- to C-terminus: Citrate lyase acyl carrier protein (101 aa).

At S14 the chain carries O-(phosphoribosyl dephospho-coenzyme A)serine.

This sequence belongs to the CitD family. In terms of assembly, oligomer with a subunit composition of (alpha,beta,gamma)6.

The protein resides in the cytoplasm. Covalent carrier of the coenzyme of citrate lyase. This Lacticaseibacillus casei (strain BL23) (Lactobacillus casei) protein is Citrate lyase acyl carrier protein.